Here is a 290-residue protein sequence, read N- to C-terminus: Agmatinase (290 aa).

Mn(2+) contacts are provided by histidine 112, aspartate 135, histidine 137, aspartate 139, aspartate 216, and aspartate 218.

Belongs to the arginase family. Agmatinase subfamily. Mn(2+) serves as cofactor.

The catalysed reaction is agmatine + H2O = urea + putrescine. Its pathway is amine and polyamine biosynthesis; putrescine biosynthesis via agmatine pathway; putrescine from agmatine: step 1/1. In terms of biological role, catalyzes the formation of putrescine from agmatine. In Bacillus subtilis (strain 168), this protein is Agmatinase (speB).